An 855-amino-acid polypeptide reads, in one-letter code: Coiled-coil domain-containing protein 87 (855 aa).

Disordered regions lie at residues 23–43 (LFPSKAKPPPEPPKRPSQDAT) and 278–302 (SRPSPMVPLPSHSPSSESHQFPTSP). Residues 287 to 296 (PSHSPSSESH) show a composition bias toward low complexity. 2 coiled-coil regions span residues 387-413 (TRRLTAQHHLEKLQQMIKSLQEEEASG) and 764-789 (RSYLQRKLNRMESNLVSLLERIESVF).

The protein belongs to the CCDC87 family. In terms of tissue distribution, specifically expressed in testis (at protein level). Not detected in other tissues tested (at protein level). In the testis, localizes to pachytene spermatocytes and spermatids.

Functionally, plays a role in spermatogenesis, where it is important for normal sperm head morphology. Also required for the acrosome reaction and thus normal male fertility. This chain is Coiled-coil domain-containing protein 87 (Ccdc87), found in Mus musculus (Mouse).